The sequence spans 74 residues: U3-agatoxin-Ao1d (74 aa).

An N-terminal signal peptide occupies residues 1–20; it reads MKAAISLLLLSALLFVVIEA. Positions 21–34 are excised as a propeptide; sequence ITYEEGKELFQGER. 4 cysteine pairs are disulfide-bonded: Cys37-Cys53, Cys44-Cys58, Cys52-Cys68, and Cys60-Cys66. Ser72 is subject to Serine amide.

Belongs to the neurotoxin 07 (Beta/delta-agtx) family. 02 (aga-3) subfamily. As to expression, expressed by the venom gland.

Its subcellular location is the secreted. Its function is as follows. Insecticidal neurotoxin that induces an irreversible spastic paralysis when injected into insects. Modifies presynaptic voltage-gated sodium channels (Nav), causing them to open at the normal resting potential of the nerve. This leads to spontaneous release of neurotransmitter and repetitive action potentials in motor neurons. This Agelena orientalis (Funnel-web spider) protein is U3-agatoxin-Ao1d.